Consider the following 328-residue polypeptide: Ferredoxin--NADP reductase (328 aa).

FAD-binding residues include Glu36, Gln44, Tyr49, Val89, Phe123, Asp284, and Thr324.

Belongs to the ferredoxin--NADP reductase type 2 family. As to quaternary structure, homodimer. Requires FAD as cofactor.

It catalyses the reaction 2 reduced [2Fe-2S]-[ferredoxin] + NADP(+) + H(+) = 2 oxidized [2Fe-2S]-[ferredoxin] + NADPH. This Lacticaseibacillus paracasei (strain ATCC 334 / BCRC 17002 / CCUG 31169 / CIP 107868 / KCTC 3260 / NRRL B-441) (Lactobacillus paracasei) protein is Ferredoxin--NADP reductase.